The following is a 259-amino-acid chain: Haloacid dehalogenase-like hydrolase domain-containing protein 2 (259 aa).

2 residues coordinate Mg(2+): D13 and S15. Substrate is bound by residues 13-15 (DLS) and 46-47 (TN). The stretch at 47–71 (NTTKESKQDLLERLRKLEFDISEDE) forms a coiled coil. K50 carries the post-translational modification N6-succinyllysine. K179 lines the substrate pocket. D204 contributes to the Mg(2+) binding site.

Belongs to the HAD-like hydrolase superfamily. The cofactor is Mg(2+).

This is Haloacid dehalogenase-like hydrolase domain-containing protein 2 (HDHD2) from Homo sapiens (Human).